A 31-amino-acid chain; its full sequence is Photosystem II reaction center protein T (31 aa).

A helical transmembrane segment spans residues A3–F23.

Belongs to the PsbT family. In terms of assembly, PSII is composed of 1 copy each of membrane proteins PsbA, PsbB, PsbC, PsbD, PsbE, PsbF, PsbH, PsbI, PsbJ, PsbK, PsbL, PsbM, PsbT, PsbY, PsbZ, Psb30/Ycf12, at least 3 peripheral proteins of the oxygen-evolving complex and a large number of cofactors. It forms dimeric complexes.

It localises to the plastid. Its subcellular location is the chloroplast thylakoid membrane. Its function is as follows. Found at the monomer-monomer interface of the photosystem II (PS II) dimer, plays a role in assembly and dimerization of PSII. PSII is a light-driven water plastoquinone oxidoreductase, using light energy to abstract electrons from H(2)O, generating a proton gradient subsequently used for ATP formation. The chain is Photosystem II reaction center protein T from Nephroselmis olivacea (Green alga).